A 939-amino-acid chain; its full sequence is Valine--tRNA ligase (939 aa).

Residues proline 45–histidine 55 carry the 'HIGH' region motif. Positions lysine 549 to serine 553 match the 'KMSKS' region motif. Position 552 (lysine 552) interacts with ATP. Positions alanine 876 to alanine 939 form a coiled coil.

It belongs to the class-I aminoacyl-tRNA synthetase family. ValS type 1 subfamily. As to quaternary structure, monomer.

Its subcellular location is the cytoplasm. It carries out the reaction tRNA(Val) + L-valine + ATP = L-valyl-tRNA(Val) + AMP + diphosphate. Catalyzes the attachment of valine to tRNA(Val). As ValRS can inadvertently accommodate and process structurally similar amino acids such as threonine, to avoid such errors, it has a 'posttransfer' editing activity that hydrolyzes mischarged Thr-tRNA(Val) in a tRNA-dependent manner. The protein is Valine--tRNA ligase of Chromobacterium violaceum (strain ATCC 12472 / DSM 30191 / JCM 1249 / CCUG 213 / NBRC 12614 / NCIMB 9131 / NCTC 9757 / MK).